The chain runs to 335 residues: Beta-hexosaminidase (335 aa).

Residues Asp-60, Arg-68, Arg-133, and 163-164 (KH) each bind substrate. His-176 serves as the catalytic Proton donor/acceptor. The active-site Nucleophile is the Asp-247.

This sequence belongs to the glycosyl hydrolase 3 family. NagZ subfamily.

Its subcellular location is the cytoplasm. The enzyme catalyses Hydrolysis of terminal non-reducing N-acetyl-D-hexosamine residues in N-acetyl-beta-D-hexosaminides.. Its pathway is cell wall biogenesis; peptidoglycan recycling. Its function is as follows. Plays a role in peptidoglycan recycling by cleaving the terminal beta-1,4-linked N-acetylglucosamine (GlcNAc) from peptide-linked peptidoglycan fragments, giving rise to free GlcNAc, anhydro-N-acetylmuramic acid and anhydro-N-acetylmuramic acid-linked peptides. This chain is Beta-hexosaminidase, found in Stenotrophomonas maltophilia (strain K279a).